The sequence spans 276 residues: NH(3)-dependent NAD(+) synthetase (276 aa).

Position 51 to 58 (51 to 58) interacts with ATP; the sequence is GISGGVDS. Mg(2+) is bound at residue aspartate 57. A deamido-NAD(+)-binding site is contributed by arginine 148. ATP is bound at residue threonine 168. Glutamate 173 lines the Mg(2+) pocket. Deamido-NAD(+)-binding residues include lysine 181 and aspartate 188. ATP-binding residues include lysine 197 and threonine 219. Residue 268–269 participates in deamido-NAD(+) binding; sequence HK.

Belongs to the NAD synthetase family. In terms of assembly, homodimer.

The enzyme catalyses deamido-NAD(+) + NH4(+) + ATP = AMP + diphosphate + NAD(+) + H(+). It participates in cofactor biosynthesis; NAD(+) biosynthesis; NAD(+) from deamido-NAD(+) (ammonia route): step 1/1. In terms of biological role, catalyzes the ATP-dependent amidation of deamido-NAD to form NAD. Uses ammonia as a nitrogen source. This is NH(3)-dependent NAD(+) synthetase from Streptomyces coelicolor (strain ATCC BAA-471 / A3(2) / M145).